The primary structure comprises 789 residues: Cadherin-10 (789 aa).

The first 22 residues, 1–22 (MTIQQVLLLLLLWMWLLHPCRT), serve as a signal peptide directing secretion. The propeptide occupies 23–54 (EMLFRRTPDLRPKGFVGRTSGSDGKALHRQKR). Cadherin domains follow at residues 55–160 (GWMW…EPTF), 161–269 (PEEI…PPRF), 270–384 (PQST…PPVF), 385–487 (SRSS…DNAP), and 488–606 (QFAV…LLLP). The Extracellular portion of the chain corresponds to 55 to 606 (GWMWNQFFLL…SCNAEALLLP (552 aa)). The N-linked (GlcNAc...) asparagine glycan is linked to Asn256. N-linked (GlcNAc...) asparagine glycans are attached at residues Asn438, Asn456, and Asn534. A helical transmembrane segment spans residues 607–634 (AGLSTGALIAILLCIIILLVIVVLFAAL). At 635-789 (KRQRKKEPLI…GGGESDKDAS (155 aa)) the chain is on the cytoplasmic side.

Its subcellular location is the cell membrane. Cadherins are calcium-dependent cell adhesion proteins. They preferentially interact with themselves in a homophilic manner in connecting cells; cadherins may thus contribute to the sorting of heterogeneous cell types. This Gallus gallus (Chicken) protein is Cadherin-10 (CDH10).